The chain runs to 727 residues: Polyribonucleotide nucleotidyltransferase (727 aa).

Residues D491 and D497 each coordinate Mg(2+). The 60-residue stretch at 558 to 617 folds into the KH domain; the sequence is PRIITASIHPDKIREVIGPGGKTIKKIIDETGVKIDIEDDGRVFISAVDGEAGENALKII. Residues 627 to 701 enclose the S1 motif domain; it reads GRIYNGRVTR…KQGRLNLSRK (75 aa). The tract at residues 698–727 is disordered; it reads LSRKEALPNPNPSSNPNPNGITANRNPRNS. The segment covering 717–727 has biased composition (polar residues); that stretch reads GITANRNPRNS.

Belongs to the polyribonucleotide nucleotidyltransferase family. Mg(2+) is required as a cofactor.

It localises to the cytoplasm. It catalyses the reaction RNA(n+1) + phosphate = RNA(n) + a ribonucleoside 5'-diphosphate. In terms of biological role, involved in mRNA degradation. Catalyzes the phosphorolysis of single-stranded polyribonucleotides processively in the 3'- to 5'-direction. This Desulfitobacterium hafniense (strain Y51) protein is Polyribonucleotide nucleotidyltransferase.